Consider the following 237-residue polypeptide: AA9 family lytic polysaccharide monooxygenase C (237 aa).

A signal peptide spans 1–15 (MKVLAPLILAGAASA). Residues His16 and His99 each coordinate Cu(2+). 2 disulfides stabilise this stretch: Cys54–Cys185 and Cys155–Cys237. Asn112 carries N-linked (GlcNAc...) asparagine glycosylation. The O2 site is built by His171 and Gln180. Tyr182 is a binding site for Cu(2+).

This sequence belongs to the polysaccharide monooxygenase AA9 family. The cofactor is Cu(2+).

It is found in the secreted. It catalyses the reaction [(1-&gt;4)-beta-D-glucosyl]n+m + reduced acceptor + O2 = 4-dehydro-beta-D-glucosyl-[(1-&gt;4)-beta-D-glucosyl]n-1 + [(1-&gt;4)-beta-D-glucosyl]m + acceptor + H2O.. Is able to utilize various natural phenolic compounds as reducing agents. Most of these reducing agents are present in plants, either free or as lignin building blocks, such as sinapic acid, or as flavonoids such as catechin and dopamine. Phenolic compounds with 1,2-benzenediol and 1,2,3-benzenetriol moieties yield the highest release of oxidized and non-oxidized glucooligosaccharides from cellulose compared to monophenols or sulfur-containing compounds. Lytic polysaccharide monooxygenase (LPMO) that depolymerizes crystalline and amorphous polysaccharides via the oxidation of scissile alpha- or beta-(1-4)-glycosidic bonds, yielding C4 oxidation products. Catalysis by LPMOs requires the reduction of the active-site copper from Cu(II) to Cu(I) by a reducing agent and H(2)O(2) or O(2) as a cosubstrate. Shows oxidative cleavage of beta-(1-3, 1-4)-glucan from oat spelt or xyloglucan from tamarind seed, in addition to cellulose. This is AA9 family lytic polysaccharide monooxygenase C from Thermothelomyces thermophilus (strain ATCC 42464 / BCRC 31852 / DSM 1799) (Sporotrichum thermophile).